A 129-amino-acid chain; its full sequence is Phosphoribosyl-AMP cyclohydrolase (129 aa).

Position 86 (D86) interacts with Mg(2+). Position 87 (C87) interacts with Zn(2+). The Mg(2+) site is built by D88 and D90. The Zn(2+) site is built by C104 and C111.

Belongs to the PRA-CH family. In terms of assembly, homodimer. Requires Mg(2+) as cofactor. Zn(2+) is required as a cofactor.

It localises to the cytoplasm. It carries out the reaction 1-(5-phospho-beta-D-ribosyl)-5'-AMP + H2O = 1-(5-phospho-beta-D-ribosyl)-5-[(5-phospho-beta-D-ribosylamino)methylideneamino]imidazole-4-carboxamide. It functions in the pathway amino-acid biosynthesis; L-histidine biosynthesis; L-histidine from 5-phospho-alpha-D-ribose 1-diphosphate: step 3/9. In terms of biological role, catalyzes the hydrolysis of the adenine ring of phosphoribosyl-AMP. This chain is Phosphoribosyl-AMP cyclohydrolase, found in Ignicoccus hospitalis (strain KIN4/I / DSM 18386 / JCM 14125).